Here is a 307-residue protein sequence, read N- to C-terminus: Aspartate carbamoyltransferase catalytic subunit (307 aa).

Carbamoyl phosphate contacts are provided by Arg54 and Thr55. Lys83 lines the L-aspartate pocket. Carbamoyl phosphate contacts are provided by Arg104, His132, and Gln135. Residues Arg165 and Arg228 each contribute to the L-aspartate site. Residues Leu267 and Pro268 each contribute to the carbamoyl phosphate site.

Belongs to the aspartate/ornithine carbamoyltransferase superfamily. ATCase family. In terms of assembly, heterododecamer (2C3:3R2) of six catalytic PyrB chains organized as two trimers (C3), and six regulatory PyrI chains organized as three dimers (R2).

The enzyme catalyses carbamoyl phosphate + L-aspartate = N-carbamoyl-L-aspartate + phosphate + H(+). It participates in pyrimidine metabolism; UMP biosynthesis via de novo pathway; (S)-dihydroorotate from bicarbonate: step 2/3. Catalyzes the condensation of carbamoyl phosphate and aspartate to form carbamoyl aspartate and inorganic phosphate, the committed step in the de novo pyrimidine nucleotide biosynthesis pathway. The chain is Aspartate carbamoyltransferase catalytic subunit from Clostridium botulinum (strain Loch Maree / Type A3).